A 367-amino-acid chain; its full sequence is Serine/threonine-protein kinase Sgk2 (367 aa).

A disordered region spans residues 1 to 26; sequence MNSSPAGTPSPQPSRANGNINLGPSA. Ser-10 carries the post-translational modification Phosphoserine. In terms of domain architecture, Protein kinase spans 35 to 292; that stretch reads FDFLKVIGKG…FLEIKNHVFF (258 aa). ATP-binding positions include 41–49 and Lys-64; that span reads IGKGNYGKV. The Nuclear localization signal motif lies at 68 to 78; sequence KKSILKKKEQS. Catalysis depends on Asp-159, which acts as the Proton acceptor. At Thr-193 the chain carries Phosphothreonine; by PDPK1. In terms of domain architecture, AGC-kinase C-terminal spans 293-367; that stretch reads SPINWDDLYH…APEDDDILDC (75 aa). Residues Ser-334 and Ser-356 each carry the phosphoserine modification. At Tyr-357 the chain carries Phosphotyrosine.

It belongs to the protein kinase superfamily. AGC Ser/Thr protein kinase family. In terms of processing, activated by phosphorylation on Ser-356 by an unknown kinase (may be mTORC2 but not confirmed), transforming it into a substrate for PDPK1 which then phosphorylates it on Thr-193. In terms of tissue distribution, highly expressed in liver, kidney and pancreas, and at lower levels in brain.

It is found in the cytoplasm. The protein localises to the nucleus. The catalysed reaction is L-seryl-[protein] + ATP = O-phospho-L-seryl-[protein] + ADP + H(+). It catalyses the reaction L-threonyl-[protein] + ATP = O-phospho-L-threonyl-[protein] + ADP + H(+). Two specific sites, one in the kinase domain (Thr-193) and the other in the C-terminal regulatory region (Ser-356), need to be phosphorylated for its full activation. Serine/threonine-protein kinase which is involved in the regulation of a wide variety of ion channels, membrane transporters, cell growth, survival and proliferation. Up-regulates Na(+) channels: SCNN1A/ENAC, K(+) channels: KCNA3/Kv1.3, KCNE1 and KCNQ1, amino acid transporter: SLC6A19, glutamate transporter: SLC1A6/EAAT4, glutamate receptors: GRIA1/GLUR1 and GRIK2/GLUR6, Na(+)/H(+) exchanger: SLC9A3/NHE3, and the Na(+)/K(+) ATPase. This chain is Serine/threonine-protein kinase Sgk2 (SGK2), found in Homo sapiens (Human).